The primary structure comprises 213 residues: Small ribosomal subunit protein uS5 (213 aa).

The 64-residue stretch at 49–112 (LEEEVMDVNL…DNAKYNLIKV (64 aa)) folds into the S5 DRBM domain.

Belongs to the universal ribosomal protein uS5 family. As to quaternary structure, part of the 30S ribosomal subunit. Contacts protein S4.

With S4 and S12 plays an important role in translational accuracy. The protein is Small ribosomal subunit protein uS5 of Methanobrevibacter smithii (strain ATCC 35061 / DSM 861 / OCM 144 / PS).